Here is a 60-residue protein sequence, read N- to C-terminus: DNA-directed RNA polymerase subunit Rpo6 (60 aa).

The protein belongs to the archaeal Rpo6/eukaryotic RPB6 RNA polymerase subunit family. As to quaternary structure, part of the RNA polymerase complex.

It localises to the cytoplasm. The catalysed reaction is RNA(n) + a ribonucleoside 5'-triphosphate = RNA(n+1) + diphosphate. In terms of biological role, DNA-dependent RNA polymerase (RNAP) catalyzes the transcription of DNA into RNA using the four ribonucleoside triphosphates as substrates. The sequence is that of DNA-directed RNA polymerase subunit Rpo6 from Methanothrix thermoacetophila (strain DSM 6194 / JCM 14653 / NBRC 101360 / PT) (Methanosaeta thermophila).